We begin with the raw amino-acid sequence, 450 residues long: Putative zinc metalloprotease PA3649 (450 aa).

Position 21 (histidine 21) interacts with Zn(2+). Glutamate 22 is an active-site residue. Histidine 25 lines the Zn(2+) pocket. The helical transmembrane segment at 97-119 (IAIVAAGPIANFLLAILFFWVVA) threads the bilayer. The PDZ domain maps to 199–291 (GWLKGEDNPD…VLDVALELAV (93 aa)). The helical transmembrane segment at 425–444 (AWGMQIGISLVVGVMLLALV) threads the bilayer.

Belongs to the peptidase M50B family. The cofactor is Zn(2+).

It is found in the cell inner membrane. This is Putative zinc metalloprotease PA3649 from Pseudomonas aeruginosa (strain ATCC 15692 / DSM 22644 / CIP 104116 / JCM 14847 / LMG 12228 / 1C / PRS 101 / PAO1).